Here is a 109-residue protein sequence, read N- to C-terminus: Cell division protein ZapA (109 aa).

A coiled-coil region spans residues 21 to 99 (PEQRDALNQA…IEQALLEQGR (79 aa)).

It belongs to the ZapA family. Type 1 subfamily. In terms of assembly, homodimer. Interacts with FtsZ.

The protein resides in the cytoplasm. Its function is as follows. Activator of cell division through the inhibition of FtsZ GTPase activity, therefore promoting FtsZ assembly into bundles of protofilaments necessary for the formation of the division Z ring. It is recruited early at mid-cell but it is not essential for cell division. In Klebsiella pneumoniae (strain 342), this protein is Cell division protein ZapA.